We begin with the raw amino-acid sequence, 97 residues long: Large ribosomal subunit protein uL23 (97 aa).

This sequence belongs to the universal ribosomal protein uL23 family. Part of the 50S ribosomal subunit. Contacts protein L29, and trigger factor when it is bound to the ribosome.

Its function is as follows. One of the early assembly proteins it binds 23S rRNA. One of the proteins that surrounds the polypeptide exit tunnel on the outside of the ribosome. Forms the main docking site for trigger factor binding to the ribosome. This is Large ribosomal subunit protein uL23 from Methylococcus capsulatus (strain ATCC 33009 / NCIMB 11132 / Bath).